The following is a 404-amino-acid chain: Formate-dependent phosphoribosylglycinamide formyltransferase (404 aa).

N(1)-(5-phospho-beta-D-ribosyl)glycinamide is bound by residues 27-28 (EL) and Glu87. Residues Arg120, Lys162, 167–172 (SSGKGQ), 202–205 (EGFI), and Glu210 each bind ATP. Positions 125–320 (RLAAETLGLP…EFELHARALL (196 aa)) constitute an ATP-grasp domain. Mg(2+) contacts are provided by Glu279 and Glu291. N(1)-(5-phospho-beta-D-ribosyl)glycinamide-binding positions include Asp298, Lys367, and 374 to 375 (RR).

The protein belongs to the PurK/PurT family. As to quaternary structure, homodimer.

The catalysed reaction is N(1)-(5-phospho-beta-D-ribosyl)glycinamide + formate + ATP = N(2)-formyl-N(1)-(5-phospho-beta-D-ribosyl)glycinamide + ADP + phosphate + H(+). The protein operates within purine metabolism; IMP biosynthesis via de novo pathway; N(2)-formyl-N(1)-(5-phospho-D-ribosyl)glycinamide from N(1)-(5-phospho-D-ribosyl)glycinamide (formate route): step 1/1. Its function is as follows. Involved in the de novo purine biosynthesis. Catalyzes the transfer of formate to 5-phospho-ribosyl-glycinamide (GAR), producing 5-phospho-ribosyl-N-formylglycinamide (FGAR). Formate is provided by PurU via hydrolysis of 10-formyl-tetrahydrofolate. The protein is Formate-dependent phosphoribosylglycinamide formyltransferase of Bordetella pertussis (strain Tohama I / ATCC BAA-589 / NCTC 13251).